The following is a 236-amino-acid chain: Phosphatidylserine decarboxylase proenzyme (236 aa).

Ser203 serves as the catalytic Schiff-base intermediate with substrate; via pyruvic acid. A Pyruvic acid (Ser); by autocatalysis modification is found at Ser203.

The protein belongs to the phosphatidylserine decarboxylase family. PSD-A subfamily. In terms of assembly, heterodimer of a large membrane-associated beta subunit and a small pyruvoyl-containing alpha subunit. The cofactor is pyruvate. Post-translationally, is synthesized initially as an inactive proenzyme. Formation of the active enzyme involves a self-maturation process in which the active site pyruvoyl group is generated from an internal serine residue via an autocatalytic post-translational modification. Two non-identical subunits are generated from the proenzyme in this reaction, and the pyruvate is formed at the N-terminus of the alpha chain, which is derived from the carboxyl end of the proenzyme. The post-translation cleavage follows an unusual pathway, termed non-hydrolytic serinolysis, in which the side chain hydroxyl group of the serine supplies its oxygen atom to form the C-terminus of the beta chain, while the remainder of the serine residue undergoes an oxidative deamination to produce ammonia and the pyruvoyl prosthetic group on the alpha chain.

The protein resides in the cell membrane. The enzyme catalyses a 1,2-diacyl-sn-glycero-3-phospho-L-serine + H(+) = a 1,2-diacyl-sn-glycero-3-phosphoethanolamine + CO2. Its pathway is phospholipid metabolism; phosphatidylethanolamine biosynthesis; phosphatidylethanolamine from CDP-diacylglycerol: step 2/2. Functionally, catalyzes the formation of phosphatidylethanolamine (PtdEtn) from phosphatidylserine (PtdSer). The polypeptide is Phosphatidylserine decarboxylase proenzyme (Saccharopolyspora erythraea (strain ATCC 11635 / DSM 40517 / JCM 4748 / NBRC 13426 / NCIMB 8594 / NRRL 2338)).